Consider the following 441-residue polypeptide: Glutamate-1-semialdehyde 2,1-aminomutase (441 aa).

K273 is modified (N6-(pyridoxal phosphate)lysine).

The protein belongs to the class-III pyridoxal-phosphate-dependent aminotransferase family. HemL subfamily. Pyridoxal 5'-phosphate serves as cofactor.

The protein resides in the cytoplasm. The catalysed reaction is (S)-4-amino-5-oxopentanoate = 5-aminolevulinate. It participates in porphyrin-containing compound metabolism; protoporphyrin-IX biosynthesis; 5-aminolevulinate from L-glutamyl-tRNA(Glu): step 2/2. This Pyrobaculum calidifontis (strain DSM 21063 / JCM 11548 / VA1) protein is Glutamate-1-semialdehyde 2,1-aminomutase.